Consider the following 458-residue polypeptide: MKEYKTVSKVAGPLLFVEKTEPVSYEEQVSLVLADGTMKRGQVLDTSEDLVVVQCFETTTGLGRDTGVRFLGETFKMPVSKTMLGRILSGGGKPIDGGPAIVPDKRLDINGAAINPYARGTPRDFIQTGISTIDGTNTLVRGQKLPIFSSAGLPHNEIALQIARQAKVPGSSDEFAVVFAAMGITREEANYFMADFERTGALERAVVFLNLADDPAVERTVTPRLALTTAEYLAYELGYHVLVILTDMTNYCEALRQIGAAREEVPGRRGYPGYMYTDLASIYERAGIIKGLKGSVTQIPILTMPGDDITHPIPDLTGYITEGQIVISPELHRKGIYPPINVLPSLSRLMNLGIGKGMTREDHKKVSDMMYSGYAEGVDLRGLVAIVGKDALSERDQKFLEFADAFEDKFVRQGSDEDRTIAQTLDVGWGMFTQLPESELEKRIDRDLIKTYHPNYRK.

This sequence belongs to the ATPase alpha/beta chains family. As to quaternary structure, has multiple subunits with at least A(3), B(3), C, D, E, F, H, I and proteolipid K(x).

It is found in the cell membrane. Functionally, component of the A-type ATP synthase that produces ATP from ADP in the presence of a proton gradient across the membrane. The B chain is a regulatory subunit. The polypeptide is A-type ATP synthase subunit B (Methanocorpusculum labreanum (strain ATCC 43576 / DSM 4855 / Z)).